We begin with the raw amino-acid sequence, 372 residues long: Peptidyl-prolyl cis-trans isomerase D (372 aa).

The PPIase cyclophilin-type domain maps to 10–173 (FFDIQIGQQQ…TDVTIAECGE (164 aa)). Positions 174 to 193 (LTGEDYDNADKQTPDATGDP) are disordered. TPR repeat units lie at residues 215 to 248 (ASEL…LNEF), 268 to 304 (FTLH…ASAK), and 309 to 342 (AKVY…APSD).

The protein belongs to the cyclophilin-type PPIase family. PPIase D subfamily.

The protein localises to the cytoplasm. The catalysed reaction is [protein]-peptidylproline (omega=180) = [protein]-peptidylproline (omega=0). Its function is as follows. PPIases accelerate the folding of proteins. It catalyzes the cis-trans isomerization of proline imidic peptide bonds in oligopeptides. This Emericella nidulans (strain FGSC A4 / ATCC 38163 / CBS 112.46 / NRRL 194 / M139) (Aspergillus nidulans) protein is Peptidyl-prolyl cis-trans isomerase D (cpr6).